The following is a 419-amino-acid chain: E3 ubiquitin-protein ligase RNF130 (419 aa).

The N-terminal stretch at 1-27 (MSGAARAGPARLAALALLTCSLWPTRA) is a signal peptide. The Extracellular portion of the chain corresponds to 28 to 194 (DNASQEYYTA…MPPKNFSRGS (167 aa)). N-linked (GlcNAc...) asparagine glycosylation is found at N29, N40, N112, N135, N172, and N189. Positions 105–176 (IALLQRGNCT…SYLEKNISVQ (72 aa)) constitute a PA domain. Residues 195–217 (LVFVSISFIVLMIISSAWLIFYF) traverse the membrane as a helical segment. Residues 218 to 419 (IQKIRYTNAR…SLNANEVEWF (202 aa)) are Cytoplasmic-facing. An RING-type zinc finger spans residues 264–305 (CAVCIESYKQNDVVRVLPCKHVFHKSCVDPWLSEHCTCPMCK). A Phosphoserine modification is found at S341.

In terms of tissue distribution, in testis sections, expressed in interstitial tissue and seminiferous tubules. In tubules, expression is mainly in postmeiotic germ cells and to a much lesser extent in Sertoli cells (at protein level). Expressed at high levels in liver, lung, stomach, heart and thymus.

The protein localises to the membrane. The protein resides in the cytoplasm. The enzyme catalyses S-ubiquitinyl-[E2 ubiquitin-conjugating enzyme]-L-cysteine + [acceptor protein]-L-lysine = [E2 ubiquitin-conjugating enzyme]-L-cysteine + N(6)-ubiquitinyl-[acceptor protein]-L-lysine.. The protein operates within protein modification; protein ubiquitination. Functionally, acts as an E3 ubiquitin-protein ligase. May have a role during the programmed cell death of hematopoietic cells. The sequence is that of E3 ubiquitin-protein ligase RNF130 from Rattus norvegicus (Rat).